Reading from the N-terminus, the 428-residue chain is MSSDFFIPDPEGLIPSAEGYFGAYGGKFIPEALVAAVDEVAVEYDKAKSDPAFAAELNELMVNYTGRPSALTEVPRFAEHAGGARIFLKREDLNHTGSHKINNVLGQALLTKRMGKTRVIAETGAGQHGVATATACALFGLDCTIYMGEIDTERQALNVARMRMLGAEVVAVKSGSRTLKDAINEAFRDWVANVDRTHYLFGTVAGPHPFPAMVRDFHRVIGVEARRQILERAGRLPDAAVACVGGGSNAIGLFHAFIPDEGVRLVGCEPAGHGVETGEHAATLTAGEPGILHGSRSYVLQDDEGQITEPYSISAGLDYPGIGPEHSYLKDVGRGEYRAVTDDAAMQALRLLSRTEGIIPAIESAHALAGALDLGKELGKDGLILVNLSGRGDKDMDTAARYFGLYDADAAVEADADSDRAEIEGDAK.

Lysine 100 carries the post-translational modification N6-(pyridoxal phosphate)lysine.

This sequence belongs to the TrpB family. As to quaternary structure, tetramer of two alpha and two beta chains. It depends on pyridoxal 5'-phosphate as a cofactor.

It catalyses the reaction (1S,2R)-1-C-(indol-3-yl)glycerol 3-phosphate + L-serine = D-glyceraldehyde 3-phosphate + L-tryptophan + H2O. Its pathway is amino-acid biosynthesis; L-tryptophan biosynthesis; L-tryptophan from chorismate: step 5/5. The beta subunit is responsible for the synthesis of L-tryptophan from indole and L-serine. In Streptomyces griseus subsp. griseus (strain JCM 4626 / CBS 651.72 / NBRC 13350 / KCC S-0626 / ISP 5235), this protein is Tryptophan synthase beta chain.